A 78-amino-acid chain; its full sequence is MNLDLDTNLIILIIYAALAGAYFLVMPAIVYAYLKTRWYVVSSIERVFMYFLMFLFFPGMLVLSPFLNFRPRKQQIES.

2 consecutive transmembrane segments (helical) span residues 10-30 (IILI…PAIV) and 47-67 (VFMY…SPFL).

Belongs to the complex I NdhL subunit family. NDH-1 can be composed of about 15 different subunits; different subcomplexes with different compositions have been identified which probably have different functions.

Its subcellular location is the cellular thylakoid membrane. The enzyme catalyses a plastoquinone + NADH + (n+1) H(+)(in) = a plastoquinol + NAD(+) + n H(+)(out). The catalysed reaction is a plastoquinone + NADPH + (n+1) H(+)(in) = a plastoquinol + NADP(+) + n H(+)(out). NDH-1 shuttles electrons from an unknown electron donor, via FMN and iron-sulfur (Fe-S) centers, to quinones in the respiratory and/or the photosynthetic chain. The immediate electron acceptor for the enzyme in this species is believed to be plastoquinone. Couples the redox reaction to proton translocation, and thus conserves the redox energy in a proton gradient. Cyanobacterial NDH-1 also plays a role in inorganic carbon-concentration. This Trichodesmium erythraeum (strain IMS101) protein is NAD(P)H-quinone oxidoreductase subunit L.